The primary structure comprises 97 residues: uncharacterized protein (97 aa).

The first 21 residues, 1–21 (MNKKFSISLLSTILAFLLVLG), serve as a signal peptide directing secretion. Residue C22 is the site of N-palmitoyl cysteine attachment. C22 carries S-diacylglycerol cysteine lipidation.

To B.burgdorferi BBD15.

It localises to the cell membrane. This is an uncharacterized protein from Borreliella burgdorferi (strain ATCC 35210 / DSM 4680 / CIP 102532 / B31) (Borrelia burgdorferi).